A 174-amino-acid polypeptide reads, in one-letter code: Crossover junction endodeoxyribonuclease RuvC (174 aa).

Catalysis depends on residues Asp-8, Glu-67, and Asp-139. Asp-8, Glu-67, and Asp-139 together coordinate Mg(2+).

The protein belongs to the RuvC family. Homodimer which binds Holliday junction (HJ) DNA. The HJ becomes 2-fold symmetrical on binding to RuvC with unstacked arms; it has a different conformation from HJ DNA in complex with RuvA. In the full resolvosome a probable DNA-RuvA(4)-RuvB(12)-RuvC(2) complex forms which resolves the HJ. It depends on Mg(2+) as a cofactor.

It localises to the cytoplasm. The enzyme catalyses Endonucleolytic cleavage at a junction such as a reciprocal single-stranded crossover between two homologous DNA duplexes (Holliday junction).. Functionally, the RuvA-RuvB-RuvC complex processes Holliday junction (HJ) DNA during genetic recombination and DNA repair. Endonuclease that resolves HJ intermediates. Cleaves cruciform DNA by making single-stranded nicks across the HJ at symmetrical positions within the homologous arms, yielding a 5'-phosphate and a 3'-hydroxyl group; requires a central core of homology in the junction. The consensus cleavage sequence is 5'-(A/T)TT(C/G)-3'. Cleavage occurs on the 3'-side of the TT dinucleotide at the point of strand exchange. HJ branch migration catalyzed by RuvA-RuvB allows RuvC to scan DNA until it finds its consensus sequence, where it cleaves and resolves the cruciform DNA. The chain is Crossover junction endodeoxyribonuclease RuvC from Pseudomonas putida (strain ATCC 700007 / DSM 6899 / JCM 31910 / BCRC 17059 / LMG 24140 / F1).